Consider the following 238-residue polypeptide: Ubiquinone biosynthesis O-methyltransferase (238 aa).

Residues arginine 36, glycine 56, aspartate 77, and methionine 125 each contribute to the S-adenosyl-L-methionine site.

The protein belongs to the methyltransferase superfamily. UbiG/COQ3 family.

The catalysed reaction is a 3-demethylubiquinol + S-adenosyl-L-methionine = a ubiquinol + S-adenosyl-L-homocysteine + H(+). It catalyses the reaction a 3-(all-trans-polyprenyl)benzene-1,2-diol + S-adenosyl-L-methionine = a 2-methoxy-6-(all-trans-polyprenyl)phenol + S-adenosyl-L-homocysteine + H(+). It functions in the pathway cofactor biosynthesis; ubiquinone biosynthesis. Its function is as follows. O-methyltransferase that catalyzes the 2 O-methylation steps in the ubiquinone biosynthetic pathway. This Histophilus somni (strain 2336) (Haemophilus somnus) protein is Ubiquinone biosynthesis O-methyltransferase.